Consider the following 302-residue polypeptide: Protein ECM11 (302 aa).

2 disordered regions span residues 1–67 and 162–187; these read MTVI…TDKQ and SLNG…GSYQ. The span at 35–46 shows a compositional bias: polar residues; it reads NKPPSSINSRSG. A compositionally biased stretch (basic and acidic residues) spans 56 to 67; that stretch reads APEKKINNTDKQ. Residues 162–171 show a composition bias toward polar residues; the sequence is SLNGENTSSP.

As to quaternary structure, interacts with CDC6.

It is found in the nucleus. Functionally, may be involved in cell wall organization and biogenesis. In Saccharomyces cerevisiae (strain ATCC 204508 / S288c) (Baker's yeast), this protein is Protein ECM11 (ECM11).